A 158-amino-acid chain; its full sequence is MITIDILVESDGWNDEKMLYNITEKALKTIMHHLSLENVVSEISLLFTDDKHMAQINAQWRGKNKSTNVLSFPAFPLKVGDSPGPMLGDIIIARETVVLEAENEAKSFQDHLTHMIVHGILHLLGYNHETNEEASHMEELERKILQKLSIKDPYAELS.

3 residues coordinate Zn(2+): His-118, His-122, and His-128.

It belongs to the endoribonuclease YbeY family. Requires Zn(2+) as cofactor.

The protein localises to the cytoplasm. Its function is as follows. Single strand-specific metallo-endoribonuclease involved in late-stage 70S ribosome quality control and in maturation of the 3' terminus of the 16S rRNA. The protein is Endoribonuclease YbeY of Bartonella henselae (strain ATCC 49882 / DSM 28221 / CCUG 30454 / Houston 1) (Rochalimaea henselae).